Reading from the N-terminus, the 131-residue chain is UPF0102 protein YraN (131 aa).

This sequence belongs to the UPF0102 family.

This is UPF0102 protein YraN from Salmonella agona (strain SL483).